The primary structure comprises 880 residues: Alanine--tRNA ligase (880 aa).

Residues histidine 563, histidine 567, cysteine 665, and histidine 669 each contribute to the Zn(2+) site.

The protein belongs to the class-II aminoacyl-tRNA synthetase family. Zn(2+) is required as a cofactor.

It localises to the cytoplasm. The catalysed reaction is tRNA(Ala) + L-alanine + ATP = L-alanyl-tRNA(Ala) + AMP + diphosphate. Its function is as follows. Catalyzes the attachment of alanine to tRNA(Ala) in a two-step reaction: alanine is first activated by ATP to form Ala-AMP and then transferred to the acceptor end of tRNA(Ala). Also edits incorrectly charged Ser-tRNA(Ala) and Gly-tRNA(Ala) via its editing domain. The protein is Alanine--tRNA ligase of Desulforudis audaxviator (strain MP104C).